Here is a 452-residue protein sequence, read N- to C-terminus: CASP-like protein 4A1 (452 aa).

Over residues 1-17 (MGLRDSLKEREDRRSSE) the composition is skewed to basic and acidic residues. Disordered regions lie at residues 1 to 39 (MGLRDSLKEREDRRSSEEEGDARQSWMTRESTTGWRKES), 71 to 147 (RAGP…ARSS), and 164 to 283 (AKYV…VQFR). The Cytoplasmic portion of the chain corresponds to 1–305 (MGLRDSLKER…KRRAAAMQRT (305 aa)). Positions 25 to 34 (SWMTRESTTG) are enriched in polar residues. Composition is skewed to low complexity over residues 105–126 (QAQATASPSPSPSPTRGRTGSG) and 190–205 (GWYSWNGGRTRTAAPP). Residues 211–272 (DPPPAPPRRQ…TAPAPAPVPA (62 aa)) show a composition bias toward pro residues. Residues 306-326 (ALLARGAAAGLCLAALAVLAA) traverse the membrane as a helical segment. The Extracellular segment spans residues 327–347 (DTRKGWARDSYSNYTQFRYSE). A glycan (N-linked (GlcNAc...) asparagine) is linked at Asn-339. The chain crosses the membrane as a helical span at residues 348-368 (AVNVIGFIYSVFQFVALVELM). Over 369–389 (RRNKHLIPHPKRDLFDFTMDQ) the chain is Cytoplasmic. A helical membrane pass occupies residues 390-406 (VLTYLLISSSSSATARV). Topologically, residues 407-423 (SDLIDNWGSDPFPSMAN) are extracellular. An N-linked (GlcNAc...) asparagine glycan is attached at Asn-423. The helical transmembrane segment at 424–444 (GSIAISFLAFAVFAICSLISA) threads the bilayer. The Cytoplasmic segment spans residues 445–452 (YNLFRRDV).

The protein belongs to the Casparian strip membrane proteins (CASP) family. Homodimer and heterodimers.

The protein resides in the cell membrane. In Sorghum bicolor (Sorghum), this protein is CASP-like protein 4A1.